The chain runs to 2473 residues: MPALRPAALRALLWLWLCGAGPAHALQCRGGQEPCVNEGTCVTYHNGTGFCRCPEGFLGEYCQHRDPCEKNRCQNGGTCVPQGMLGKATCRCAPGFTGEDCQYSTSHPCFVSRPCQNGGTCHMLSRDTYECTCQVGFTGKQCQWTDACLSHPCENGSTCTSVASQFSCKCPAGLTGQKCEADINECDIPGRCQHGGTCLNLPGSYRCQCPQGFTGQHCDSPYVPCAPSPCVNGGTCRQTGDFTFECNCLPGFEGSTCERNIDDCPNHKCQNGGVCVDGVNTYNCRCPPQWTGQFCTEDVDECLLQPNACQNGGTCTNRNGGYGCVCVNGWSGDDCSENIDDCAYASCTPGSTCIDRVASFSCLCPEGKAGLLCHLDDACISNPCHKGALCDTNPLNGQYICTCPQGYKGADCTEDVDECAMANSNPCEHAGKCVNTDGAFHCECLKGYAGPRCEMDINECHSDPCQNDATCLDKIGGFTCLCMPGFKGVHCELEVNECQSNPCVNNGQCVDKVNRFQCLCPPGFTGPVCQIDIDDCSSTPCLNGAKCIDHPNGYECQCATGFTGILCDENIDNCDPDPCHHGQCQDGIDSYTCICNPGYMGAICSDQIDECYSSPCLNDGRCIDLVNGYQCNCQPGTSGLNCEINFDDCASNPCMHGVCVDGINRYSCVCSPGFTGQRCNIDIDECASNPCRKGATCINDVNGFRCICPEGPHHPSCYSQVNECLSNPCIHGNCTGGLSGYKCLCDAGWVGVNCEVDKNECLSNPCQNGGTCNNLVNGYRCTCKKGFKGYNCQVNIDECASNPCLNQGTCFDDVSGYTCHCMLPYTGKNCQTVLAPCSPNPCENAAVCKEAPNFESFSCLCAPGWQGKRCTVDVDECISKPCMNNGVCHNTQGSYVCECPPGFSGMDCEEDINDCLANPCQNGGSCVDHVNTFSCQCHPGFIGDKCQTDMNECLSEPCKNGGTCSDYVNSYTCTCPAGFHGVHCENNIDECTESSCFNGGTCVDGINSFSCLCPVGFTGPFCLHDINECSSNPCLNAGTCVDGLGTYRCICPLGYTGKNCQTLVNLCSRSPCKNKGTCVQEKARPHCLCPPGWDGAYCDVLNVSCKAAALQKGVPVEHLCQHSGICINAGNTHHCQCPLGYTGSYCEEQLDECASNPCQHGATCNDFIGGYRCECVPGYQGVNCEYEVDECQNQPCQNGGTCIDLVNHFKCSCPPGTRGLLCEENIDECAGGPHCLNGGQCVDRIGGYTCRCLPGFAGERCEGDINECLSNPCSSEGSLDCVQLKNNYNCICRSAFTGRHCETFLDVCPQKPCLNGGTCAVASNMPDGFICRCPPGFSGARCQSSCGQVKCRRGEQCIHTDSGPRCFCLNPKDCESGCASNPCQHGGTCYPQRQPPHYSCRCPPSFGGSHCELYTAPTSTPPATCQSQYCADKARDGICDEACNSHACQWDGGDCSLTMEDPWANCTSTLRCWEYINNQCDEQCNTAECLFDNFECQRNSKTCKYDKYCADHFKDNHCDQGCNSEECGWDGLDCASDQPENLAEGTLIIVVLLPPEQLLQDSRSFLRALGTLLHTNLRIKQDSQGALMVYPYFGEKSAAMKKQKMTRRSLPEEQEQEQEVIGSKIFLEIDNRQCVQDSDQCFKNTDAAAALLASHAIQGTLSYPLVSVFSELESPRNAQLLYLLAVAVVIILFFILLGVIMAKRKRKHGFLWLPEGFTLRRDSSNHKRREPVGQDAVGLKNLSVQVSEANLIGSGTSEHWVDDEGPQPKKAKAEDEALLSEDDPIDRRPWTQQHLEAADIRHTPSLALTPPQAEQEVDVLDVNVRGPDGCTPLMLASLRGGSSDLSDEDEDAEDSSANIITDLVYQGASLQAQTDRTGEMALHLAARYSRADAAKRLLDAGADANAQDNMGRCPLHAAVAADAQGVFQILIRNRVTDLDARMNDGTTPLILAARLAVEGMVAELINCQADVNAVDDHGKSALHWAAAVNNVEATLLLLKNGANRDMQDNKEETPLFLAAREGSYEAAKILLDHFANRDITDHMDRLPRDVARDRMHHDIVRLLDEYNVTPSPPGTVLTSALSPVLCGPNRSFLSLKHTPMGKKARRPNTKSTMPTSLPNLAKEAKDAKGSRRKKCLNEKVQLSESSVTLSPVDSLESPHTYVSDATSSPMITSPGILQASPTPLLAAAAPAAPVHTQHALSFSNLHDMQPLAPGASTVLPSVSQLLSHHHIAPPGSSSAGSLGRLHPVPVPADWMNRVEMNETQYSEMFGMVLAPAEGAHPGIAAPQSRPPEGKHMSTQREPLPPIVTFQLIPKGSIAQAAGAPQTQSSCPPAVAGPLPSMYQIPEMPRLPSVAFPPTMMPQQEGQVAQTIVPTYHPFPASVGKYPTPPSQHSYASSNAAERTPSHGGHLQGEHPYLTPSPESPDQWSSSSPHSASDWSDVTTSPTPGGGGGGQRGPGTHMSEPPHSNMQVYA.

The N-terminal stretch at 1 to 25 is a signal peptide; sequence MPALRPAALRALLWLWLCGAGPAHA. EGF-like domains lie at 26 to 63, 64 to 102, 105 to 143, and 144 to 180; these read LQCR…EYCQ, HRDP…EDCQ, TSHP…KQCQ, and WTDA…QKCE. At 26–1679 the chain is on the extracellular side; it reads LQCRGGQEPC…SELESPRNAQ (1654 aa). 83 disulfides stabilise this stretch: Cys28-Cys41, Cys35-Cys51, Cys53-Cys62, Cys68-Cys79, Cys73-Cys90, Cys92-Cys101, Cys109-Cys121, Cys115-Cys131, Cys133-Cys142, Cys148-Cys159, Cys153-Cys168, Cys170-Cys179, Cys186-Cys198, Cys192-Cys207, Cys209-Cys218, Cys230-Cys246, Cys248-Cys257, Cys264-Cys275, Cys269-Cys284, Cys286-Cys295, Cys302-Cys315, Cys309-Cys324, Cys326-Cys335, Cys342-Cys353, Cys347-Cys362, Cys364-Cys373, Cys379-Cys390, Cys384-Cys401, Cys403-Cys412, Cys419-Cys433, Cys427-Cys442, Cys444-Cys453, Cys460-Cys471, Cys465-Cys480, Cys482-Cys491, Cys498-Cys509, Cys503-Cys518, Cys520-Cys529, Cys536-Cys547, Cys541-Cys556, Cys558-Cys567, Cys574-Cys584, Cys579-Cys593, Cys595-Cys604, Cys611-Cys622, Cys616-Cys631, Cys633-Cys642, Cys649-Cys659, Cys654-Cys668, Cys670-Cys679, Cys686-Cys697, Cys691-Cys706, Cys708-Cys717, Cys724-Cys734, Cys729-Cys743, Cys745-Cys754, Cys761-Cys772, Cys766-Cys781, Cys783-Cys792, Cys799-Cys810, Cys804-Cys819, Cys821-Cys830, Cys837-Cys848, Cys842-Cys859, Cys861-Cys870, Cys877-Cys888, Cys882-Cys897, Cys899-Cys908, Cys915-Cys926, Cys920-Cys935, Cys937-Cys946, Cys953-Cys964, Cys958-Cys973, Cys975-Cys984, Cys991-Cys1002, Cys996-Cys1011, Cys1013-Cys1022, Cys1029-Cys1040, Cys1034-Cys1049, Cys1051-Cys1060, Cys1067-Cys1078, Cys1072-Cys1087, and Cys1089-Cys1098. Residue Asn46 is glycosylated (N-linked (GlcNAc...) asparagine). A glycan (N-linked (GlcNAc...) asparagine) is linked at Asn155. An EGF-like 5; calcium-binding domain is found at 182 to 219; sequence DINECDIPGRCQHGGTCLNLPGSYRCQCPQGFTGQHCD. The EGF-like 6; incomplete domain occupies 221-258; sequence PYVPCAPSPCVNGGTCRQTGDFTFECNCLPGFEGSTCE. An EGF-like 7; calcium-binding domain is found at 260–296; sequence NIDDCPNHKCQNGGVCVDGVNTYNCRCPPQWTGQFCT. The region spanning 298–336 is the EGF-like 8; calcium-binding domain; it reads DVDECLLQPNACQNGGTCTNRNGGYGCVCVNGWSGDDCS. One can recognise an EGF-like 9; calcium-binding domain in the interval 338–374; that stretch reads NIDDCAYASCTPGSTCIDRVASFSCLCPEGKAGLLCH. In terms of domain architecture, EGF-like 10 spans 375–413; that stretch reads LDDACISNPCHKGALCDTNPLNGQYICTCPQGYKGADCT. The 40-residue stretch at 415–454 folds into the EGF-like 11; calcium-binding domain; that stretch reads DVDECAMANSNPCEHAGKCVNTDGAFHCECLKGYAGPRCE. The region spanning 456–492 is the EGF-like 12; calcium-binding domain; sequence DINECHSDPCQNDATCLDKIGGFTCLCMPGFKGVHCE. Residues 494-530 enclose the EGF-like 13; calcium-binding domain; the sequence is EVNECQSNPCVNNGQCVDKVNRFQCLCPPGFTGPVCQ. In terms of domain architecture, EGF-like 14; calcium-binding spans 532-568; the sequence is DIDDCSSTPCLNGAKCIDHPNGYECQCATGFTGILCD. The EGF-like 15; calcium-binding domain occupies 570-605; that stretch reads NIDNCDPDPCHHGQCQDGIDSYTCICNPGYMGAICS. The EGF-like 16; calcium-binding domain occupies 607-643; the sequence is QIDECYSSPCLNDGRCIDLVNGYQCNCQPGTSGLNCE. Residue Ser613 is glycosylated (O-linked (Glc...) serine; alternate). An O-linked (Xyl...) serine; alternate glycan is attached at Ser613. In terms of domain architecture, EGF-like 17; calcium-binding spans 645 to 680; that stretch reads NFDDCASNPCMHGVCVDGINRYSCVCSPGFTGQRCN. Residues 682–718 form the EGF-like 18; calcium-binding domain; it reads DIDECASNPCRKGATCINDVNGFRCICPEGPHHPSCY. The 36-residue stretch at 720–755 folds into the EGF-like 19 domain; that stretch reads QVNECLSNPCIHGNCTGGLSGYKCLCDAGWVGVNCE. Asn733 is a glycosylation site (N-linked (GlcNAc...) asparagine). Positions 757–793 constitute an EGF-like 20; calcium-binding domain; sequence DKNECLSNPCQNGGTCNNLVNGYRCTCKKGFKGYNCQ. The 37-residue stretch at 795–831 folds into the EGF-like 21; calcium-binding domain; the sequence is NIDECASNPCLNQGTCFDDVSGYTCHCMLPYTGKNCQ. Residues 833–871 enclose the EGF-like 22 domain; it reads VLAPCSPNPCENAAVCKEAPNFESFSCLCAPGWQGKRCT. Positions 873-909 constitute an EGF-like 23; calcium-binding domain; the sequence is DVDECISKPCMNNGVCHNTQGSYVCECPPGFSGMDCE. One can recognise an EGF-like 24; calcium-binding domain in the interval 911 to 947; sequence DINDCLANPCQNGGSCVDHVNTFSCQCHPGFIGDKCQ. In terms of domain architecture, EGF-like 25; calcium-binding spans 949-985; sequence DMNECLSEPCKNGGTCSDYVNSYTCTCPAGFHGVHCE. An EGF-like 26; calcium-binding domain is found at 987 to 1023; that stretch reads NIDECTESSCFNGGTCVDGINSFSCLCPVGFTGPFCL. An EGF-like 27; calcium-binding domain is found at 1025-1061; sequence DINECSSNPCLNAGTCVDGLGTYRCICPLGYTGKNCQ. EGF-like domains are found at residues 1063–1099 and 1101–1147; these read LVNL…AYCD and LNVS…SYCE. A glycan (N-linked (GlcNAc...) asparagine) is linked at Asn1102. 24 disulfides stabilise this stretch: Cys1105–Cys1126, Cys1120–Cys1135, Cys1137–Cys1146, Cys1153–Cys1164, Cys1158–Cys1173, Cys1175–Cys1184, Cys1191–Cys1202, Cys1196–Cys1211, Cys1213–Cys1222, Cys1229–Cys1241, Cys1235–Cys1250, Cys1252–Cys1261, Cys1268–Cys1281, Cys1273–Cys1290, Cys1292–Cys1301, Cys1308–Cys1319, Cys1313–Cys1331, Cys1333–Cys1346, Cys1378–Cys1389, Cys1383–Cys1400, Cys1402–Cys1411, Cys1425–Cys1448, Cys1430–Cys1443, and Cys1439–Cys1455. The EGF-like 30; calcium-binding domain occupies 1149–1185; the sequence is QLDECASNPCQHGATCNDFIGGYRCECVPGYQGVNCE. An EGF-like 31; calcium-binding domain is found at 1187 to 1223; it reads EVDECQNQPCQNGGTCIDLVNHFKCSCPPGTRGLLCE. The EGF-like 32; calcium-binding domain occupies 1225–1262; sequence NIDECAGGPHCLNGGQCVDRIGGYTCRCLPGFAGERCE. EGF-like domains follow at residues 1264-1302, 1304-1343, and 1375-1412; these read DINE…RHCE, FLDV…ARCQ, and ESGC…SHCE. 3 LNR repeats span residues 1425–1465, 1466–1502, and 1503–1544; these read CQSQ…PWAN, CTST…NSKT, and CKYD…NLAE. Residues 1425–1679 form a negative regulatory region (NRR) region; that stretch reads CQSQYCADKA…SELESPRNAQ (255 aa). N-linked (GlcNAc...) asparagine glycosylation occurs at Asn1465. Cystine bridges form between Cys1466/Cys1489, Cys1472/Cys1484, Cys1480/Cys1496, Cys1503/Cys1527, Cys1509/Cys1522, Cys1518/Cys1534, and Cys1634/Cys1641. A helical transmembrane segment spans residues 1680–1700; that stretch reads LLYLLAVAVVIILFFILLGVI. Over 1701–2473 the chain is Cytoplasmic; that stretch reads MAKRKRKHGF…PPHSNMQVYA (773 aa). Residue Thr1718 is modified to Phosphothreonine. The interval 1755–1778 is disordered; that stretch reads GTSEHWVDDEGPQPKKAKAEDEAL. Ser1780 is subject to Phosphoserine. Phosphothreonine is present on Thr1803. Residue Ser1805 is modified to Phosphoserine. Thr1809 is subject to Phosphothreonine. ANK repeat units follow at residues 1828 to 1872, 1877 to 1906, 1910 to 1940, 1944 to 1973, 1977 to 2006, and 2010 to 2039; these read DGCT…SLQA, TGEM…DANA, MGRC…DLDA, DGTT…DVNA, HGKS…NRDM, and KEET…NRDI. 2 positions are modified to phosphoserine: Ser1843 and Ser1846. 3 positions are modified to phosphoserine: Ser2071, Ser2079, and Ser2082. A Phosphothreonine modification is found at Thr2098. Disordered stretches follow at residues 2098-2117, 2122-2169, and 2382-2473; these read TPMG…PTSL, KEAK…TSSP, and VGKY…QVYA. Basic residues predominate over residues 2099-2108; sequence PMGKKARRPN. 2 stretches are compositionally biased toward polar residues: residues 2140–2151 and 2390–2400; these read VQLSESSVTLSP and SQHSYASSNAA. A compositionally biased stretch (low complexity) spans 2419–2446; sequence PSPESPDQWSSSSPHSASDWSDVTTSPT. Residues 2447 to 2456 are compositionally biased toward gly residues; it reads PGGGGGGQRG.

The protein belongs to the NOTCH family. In terms of assembly, heterodimer of a C-terminal fragment N(TM) and an N-terminal fragment N(EC) which are probably linked by disulfide bonds. Interacts with MAML1, MAML2 and MAML3 which act as transcriptional coactivators for NOTCH2. Interacts with RELA/p65. Interacts with HIF1AN. Interacts (via ANK repeats) with TCIM, the interaction inhibits the nuclear translocation of NOTCH2 N2ICD. Interacts with CUL1, RBX1, SKP1 and FBXW7 that are SCF(FBXW7) E3 ubiquitin-protein ligase complex components. Interacts with MINAR1; this interaction increases MINAR1 stability and function. Interacts with MDK; this interaction mediates a nuclear accumulation of NOTCH2 and therefore activation of NOTCH2 signaling leading to interaction between HES1 and STAT3. Interacts with MINAR2. Synthesized in the endoplasmic reticulum as an inactive form which is proteolytically cleaved by a furin-like convertase in the trans-Golgi network before it reaches the plasma membrane to yield an active, ligand-accessible form. Cleavage results in a C-terminal fragment N(TM) and a N-terminal fragment N(EC). Following ligand binding, it is cleaved by TNF-alpha converting enzyme (TACE) to yield a membrane-associated intermediate fragment called notch extracellular truncation (NEXT). This fragment is then cleaved by presenilin dependent gamma-secretase to release a notch-derived peptide containing the intracellular domain (NICD) from the membrane. Post-translationally, hydroxylated by HIF1AN. In terms of processing, can be either O-glucosylated or O-xylosylated at Ser-613 by POGLUT1. Phosphorylated by GSK3. GSK3-mediated phosphorylation is necessary for NOTCH2 recognition by FBXW7, ubiquitination and degradation via the ubiquitin proteasome pathway. As to expression, expressed in the brain, liver, kidney, neuroepithelia, somites, optic vesicles and branchial arches, but not heart.

The protein localises to the cell membrane. The protein resides in the nucleus. It is found in the cytoplasm. Its function is as follows. Functions as a receptor for membrane-bound ligands Jagged-1 (JAG1), Jagged-2 (JAG2) and Delta-1 (DLL1) to regulate cell-fate determination. Upon ligand activation through the released notch intracellular domain (NICD) it forms a transcriptional activator complex with RBPJ/RBPSUH and activates genes of the enhancer of split locus. Affects the implementation of differentiation, proliferation and apoptotic programs. May play an essential role in postimplantation development, probably in some aspect of cell specification and/or differentiation. In collaboration with RELA/p65 enhances NFATc1 promoter activity and positively regulates RANKL-induced osteoclast differentiation. Positively regulates self-renewal of liver cancer cells. The sequence is that of Neurogenic locus notch homolog protein 2 from Mus musculus (Mouse).